Reading from the N-terminus, the 346-residue chain is Methionine import ATP-binding protein MetN 1 (346 aa).

The 240-residue stretch at 2-241 (IELKNVSKVF…PQHVTTKKFV (240 aa)) folds into the ABC transporter domain. 38–45 (GYSGAGKS) contacts ATP.

Belongs to the ABC transporter superfamily. Methionine importer (TC 3.A.1.24) family. In terms of assembly, the complex is composed of two ATP-binding proteins (MetN), two transmembrane proteins (MetI) and a solute-binding protein (MetQ).

It localises to the cell membrane. It catalyses the reaction L-methionine(out) + ATP + H2O = L-methionine(in) + ADP + phosphate + H(+). The enzyme catalyses D-methionine(out) + ATP + H2O = D-methionine(in) + ADP + phosphate + H(+). Part of the ABC transporter complex MetNIQ involved in methionine import. Responsible for energy coupling to the transport system. The chain is Methionine import ATP-binding protein MetN 1 from Bacillus anthracis.